The primary structure comprises 267 residues: Tryptophan synthase alpha chain (267 aa).

Catalysis depends on proton acceptor residues Glu47 and Asp58.

This sequence belongs to the TrpA family. In terms of assembly, tetramer of two alpha and two beta chains.

It catalyses the reaction (1S,2R)-1-C-(indol-3-yl)glycerol 3-phosphate + L-serine = D-glyceraldehyde 3-phosphate + L-tryptophan + H2O. It functions in the pathway amino-acid biosynthesis; L-tryptophan biosynthesis; L-tryptophan from chorismate: step 5/5. Its function is as follows. The alpha subunit is responsible for the aldol cleavage of indoleglycerol phosphate to indole and glyceraldehyde 3-phosphate. The chain is Tryptophan synthase alpha chain from Chlorobaculum tepidum (strain ATCC 49652 / DSM 12025 / NBRC 103806 / TLS) (Chlorobium tepidum).